We begin with the raw amino-acid sequence, 356 residues long: Vacuolar protein sorting-associated protein 26 (356 aa).

The segment at 301 to 356 is disordered; sequence MRRPGTEDDEEEKQTTSIPGTQKFTAPAPVEHPKPESPRSDPKSGSTSPDDNSDSS. A compositionally biased stretch (polar residues) spans 315–324; that stretch reads TTSIPGTQKF. Over residues 331-342 the composition is skewed to basic and acidic residues; sequence EHPKPESPRSDP.

The protein belongs to the VPS26 family.

In terms of biological role, may play a role in vesicular protein sorting, similar to the yeast retromer proteins. This Caenorhabditis elegans protein is Vacuolar protein sorting-associated protein 26 (vps-26).